A 121-amino-acid chain; its full sequence is Two-component response regulator ORR8 (121 aa).

A Response regulatory domain is found at 5-121 (HVLVVDDTHV…VDVPRIMKYI (117 aa)). Asp55 carries the post-translational modification 4-aspartylphosphate.

It belongs to the ARR family. Type-A subfamily. In terms of processing, two-component system major event consists of a His-to-Asp phosphorelay between a sensor histidine kinase (HK) and a response regulator (RR). In plants, the His-to-Asp phosphorelay involves an additional intermediate named Histidine-containing phosphotransfer protein (HPt). This multistep phosphorelay consists of a His-Asp-His-Asp sequential transfer of a phosphate group between first a His and an Asp of the HK protein, followed by the transfer to a conserved His of the HPt protein and finally the transfer to an Asp in the receiver domain of the RR protein. As to expression, expressed in mature leaves, and at low levels in roots, shoots and flowers.

Functionally, functions as a response regulator involved in His-to-Asp phosphorelay signal transduction system. Phosphorylation of the Asp residue in the receiver domain activates the ability of the protein to promote the transcription of target genes. Type-A response regulators seem to act as negative regulators of the cytokinin signaling. The chain is Two-component response regulator ORR8 from Oryza sativa subsp. indica (Rice).